We begin with the raw amino-acid sequence, 86 residues long: Large ribosomal subunit protein bL31B (86 aa).

It belongs to the bacterial ribosomal protein bL31 family. Type B subfamily. As to quaternary structure, part of the 50S ribosomal subunit.

This Erwinia tasmaniensis (strain DSM 17950 / CFBP 7177 / CIP 109463 / NCPPB 4357 / Et1/99) protein is Large ribosomal subunit protein bL31B.